Reading from the N-terminus, the 477-residue chain is Mitochondrial adenyl nucleotide antiporter SLC25A24 (477 aa).

A regulatory N-terminal domain region spans residues 1 to 173 (MLRWLRDFVL…RFWKHSTGID (173 aa)). Residues 1–197 (MLRWLRDFVL…EKKSGQWWRQ (197 aa)) lie on the Mitochondrial intermembrane side of the membrane. 4 EF-hand domains span residues 19 to 54 (EQPTRYETLFQALDRNGDGVVDIGELQEGLRNLGIP), 55 to 88 (LGQDAEEKIFTTGDVNKDGKLDFEEFMKYLKDHE), 86 to 121 (DHEKKMKLAFKSLDKNNDGKIEASEIVQSLQTLGLT), and 122 to 157 (ISEQQAELILQSIDVDGTMTVDWNEWRDYFLFNPVT). Ca(2+) contacts are provided by Asp-32, Asn-34, Asp-36, Val-38, Glu-43, Asp-68, Asn-70, Asp-72, Lys-74, Glu-79, Asp-99, Asn-101, Asp-103, Lys-105, Glu-110, Asp-135, Asp-137, Thr-139, Thr-141, and Glu-146. A linker region region spans residues 159–168 (IEEIIRFWKH). The interval 174–477 (IGDSLTIPDE…MKQTLGVTQK (304 aa)) is C-terminal transmembrane transporter domain. Solcar repeat units follow at residues 192–278 (GQWW…YKKL), 286–371 (IGTF…LKSY), and 383–471 (PGVM…MKQT). Residues 198-215 (LLAGGIAGAVSRTSTAPL) form a helical membrane-spanning segment. Over 216–252 (DRLKIMMQVHGSKSDKMNIFGGFRQMVKEGGIRSLWR) the chain is Mitochondrial matrix. The helical transmembrane segment at 253-272 (GNGTNVIKIAPETAVKFWAY) threads the bilayer. The Mitochondrial intermembrane segment spans residues 273–295 (EQYKKLLTEEGQKIGTFERFISG). Residues 296-309 (SMAGATAQTFIYPM) traverse the membrane as a helical segment. The Mitochondrial matrix portion of the chain corresponds to 310–345 (EVMKTRLAVGKTGQYSGIYDCAKKILKHEGLGAFYK). Residue Lys-320 is modified to N6-acetyllysine; alternate. An N6-succinyllysine; alternate modification is found at Lys-320. Lys-336 bears the N6-acetyllysine mark. Residues 346–365 (GYVPNLLGIIPYAGIDLAVY) form a helical membrane-spanning segment. The Mitochondrial intermembrane portion of the chain corresponds to 366–388 (ELLKSYWLDNFAKDSVNPGVMVL). A helical transmembrane segment spans residues 389 to 406 (LGCGALSSTCGQLASYPL). At 407–445 (ALVRTRMQAQAMLEGSPQLNMVGLFRRIISKEGIPGLYR) the chain is on the mitochondrial matrix side. Residue Lys-437 is modified to N6-acetyllysine; alternate. N6-succinyllysine; alternate is present on Lys-437. The chain crosses the membrane as a helical span at residues 446 to 465 (GITPNFMKVLPAVGISYVVY). At 466–477 (ENMKQTLGVTQK) the chain is on the mitochondrial intermembrane side.

The protein belongs to the mitochondrial carrier (TC 2.A.29) family. In terms of assembly, monomer. In terms of tissue distribution, expressed in all tissues tested. Highly expressed in testis, expressed at intermediate level in small intestine and pancreas, and weakly expressed in kidney, spleen, liver, skeletal muscle and heart.

It localises to the mitochondrion inner membrane. It catalyses the reaction Mg(2+)(out) + phosphate(in) + ATP(out) = Mg(2+)(in) + phosphate(out) + ATP(in). It carries out the reaction ADP(out) + phosphate(in) + H(+)(out) = ADP(in) + phosphate(out) + H(+)(in). The enzyme catalyses AMP(out) + phosphate(in) = AMP(in) + phosphate(out). The catalysed reaction is phosphate(in) + ATP(out) + 2 H(+)(out) = phosphate(out) + ATP(in) + 2 H(+)(in). It catalyses the reaction dADP(in) + ADP(out) = dADP(out) + ADP(in). It carries out the reaction Mg(2+)(in) + ADP(out) + ATP(in) + H(+)(out) = Mg(2+)(out) + ADP(in) + ATP(out) + H(+)(in). The enzyme catalyses ADP(out) + diphosphate(in) = ADP(in) + diphosphate(out). The catalysed reaction is dAMP(in) + ADP(out) + H(+)(out) = dAMP(out) + ADP(in) + H(+)(in). It catalyses the reaction 3'-AMP(in) + ADP(out) + H(+)(out) = 3'-AMP(out) + ADP(in) + H(+)(in). It carries out the reaction dAMP(out) + phosphate(in) = dAMP(in) + phosphate(out). The enzyme catalyses 3'-AMP(out) + phosphate(in) = 3'-AMP(in) + phosphate(out). The catalysed reaction is dADP(out) + phosphate(in) + H(+)(out) = dADP(in) + phosphate(out) + H(+)(in). Its activity is regulated as follows. Activated by an increase in cytosolic calcium levels that induce a conformational change of the N-terminal regulatory domain, uncapping the channel and allowing transport. Inhibited by bathophenanthroline, mersalyl, p-hydroxymercuribenzoate, bromcresol purple and tannic acid. In terms of biological role, electroneutral antiporter that mediates the transport of adenyl nucleotides through the inner mitochondrial membrane. Originally identified as an ATP-magnesium/inorganic phosphate antiporter, it also acts as a broad specificity adenyl nucleotide antiporter. By regulating the mitochondrial matrix adenyl nucleotide pool could adapt to changing cellular energetic demands and indirectly regulate adenyl nucleotide-dependent metabolic pathways. In vitro, a low activity is also observed with guanyl and pyrimidine nucleotides. May play a role in protecting cells against oxidative stress-induced cell death, by buffering calcium levels in the mitochondrial matrix through the formation of calcium-phosphate precipitates. The sequence is that of Mitochondrial adenyl nucleotide antiporter SLC25A24 from Homo sapiens (Human).